The following is a 392-amino-acid chain: 8-amino-7-oxononanoate synthase 1 (392 aa).

109-110 is a pyridoxal 5'-phosphate binding site; that stretch reads GF. H134 is a substrate binding site. Pyridoxal 5'-phosphate is bound by residues S181, 206 to 209, and 237 to 240; these read DDAH and TLSK. K240 is modified (N6-(pyridoxal phosphate)lysine). Residue T354 coordinates substrate.

This sequence belongs to the class-II pyridoxal-phosphate-dependent aminotransferase family. BioF subfamily. As to quaternary structure, homodimer. It depends on pyridoxal 5'-phosphate as a cofactor.

It carries out the reaction 6-carboxyhexanoyl-[ACP] + L-alanine + H(+) = (8S)-8-amino-7-oxononanoate + holo-[ACP] + CO2. The protein operates within cofactor biosynthesis; biotin biosynthesis. Its function is as follows. Catalyzes the decarboxylative condensation of pimeloyl-[acyl-carrier protein] and L-alanine to produce 8-amino-7-oxononanoate (AON), [acyl-carrier protein], and carbon dioxide. The protein is 8-amino-7-oxononanoate synthase 1 (kbl) of Bacillus subtilis (strain 168).